Reading from the N-terminus, the 233-residue chain is Probable GTP-binding protein EngB (233 aa).

Positions 23-209 (AVPEVAFAGR…QRIVAGWLCL (187 aa)) constitute an EngB-type G domain. Residues 31 to 38 (GRSNAGKS), 58 to 62 (GRTQH), 82 to 85 (DLPG), 149 to 152 (TKAD), and 188 to 190 (FSS) each bind GTP. Residues serine 38 and threonine 60 each coordinate Mg(2+).

It belongs to the TRAFAC class TrmE-Era-EngA-EngB-Septin-like GTPase superfamily. EngB GTPase family. It depends on Mg(2+) as a cofactor.

Functionally, necessary for normal cell division and for the maintenance of normal septation. The sequence is that of Probable GTP-binding protein EngB from Ralstonia pickettii (strain 12J).